We begin with the raw amino-acid sequence, 491 residues long: Ran-binding protein 3 (491 aa).

The span at 1 to 10 (MADLANEEKP) shows a compositional bias: basic and acidic residues. 2 disordered regions span residues 1-177 (MADL…HCEE) and 255-292 (VLSPPKLNEANSDTSRETTHAQSGSESSSQEAAPKKES). Alanine 2 is modified (N-acetylalanine). An N6-acetyllysine mark is found at lysine 9 and lysine 21. Phosphoserine occurs at positions 32, 33, and 40. Positions 49-57 (PPVKRERTS) match the Nuclear localization signal motif. A compositionally biased stretch (basic and acidic residues) spans 51-67 (VKRERTSSLTHSEEKSS). At threonine 56 the chain carries Phosphothreonine. The residue at position 58 (serine 58) is a Phosphoserine. 2 stretches are compositionally biased toward polar residues: residues 111-124 (VLSQTVPSSGTNGV) and 133-149 (PATSVSPENLTQRSPSE). The residue at position 146 (serine 146) is a Phosphoserine. A compositionally biased stretch (basic and acidic residues) spans 152 to 162 (EETHTLEEKVP). A phosphoserine mark is found at serine 257, serine 277, serine 279, and serine 296. A compositionally biased stretch (low complexity) spans 275–286 (AQSGSESSSQEA). The region spanning 302 to 442 (KATAWTCLLE…LALRSRAEQE (141 aa)) is the RanBD1 domain. The segment at 438-491 (RAEQEQEAKAPPPEPGATRATEEEDSDEDAVLAPSGVTGAGTGDEGDGQAPGST) is disordered. Phosphoserine is present on serine 463.

Interacts with CHC1 in a Ran-stimulated manner. Interacts with XPO1. Interacts (via its C-terminal R domain) with SMAD2 (dephosphorylated form via its MH1 and MH2 domains); the interaction results in the nuclear export of SMAD2 and termination of the TGF-beta signaling. Interacts (via its C-terminal R domain) with SMAD3 (dephosphorylated form via its MH1 domain); the interaction results in the nuclear export of SMAD3 and termination of the TGF-beta signaling. Post-translationally, phosphorylation at Ser-58 promotes its import into the nucleus.

Its subcellular location is the cytoplasm. It is found in the nucleus. In terms of biological role, acts as a cofactor for XPO1/CRM1-mediated nuclear export, perhaps as export complex scaffolding protein. Bound to XPO1/CRM1, stabilizes the XPO1/CRM1-cargo interaction. In the absence of Ran-bound GTP prevents binding of XPO1/CRM1 to the nuclear pore complex. Binds to CHC1/RCC1 and increases the guanine nucleotide exchange activity of CHC1/RCC1. Recruits XPO1/CRM1 to CHC1/RCC1 in a Ran-dependent manner. Negative regulator of TGF-beta signaling through interaction with the R-SMAD proteins, SMAD2 and SMAD3, and mediating their nuclear export. The polypeptide is Ran-binding protein 3 (Ranbp3) (Mus musculus (Mouse)).